The primary structure comprises 506 residues: Alpha-L-arabinofuranosidase B (506 aa).

A signal peptide spans 1–26; that stretch reads MSSGLSLERACAVALGIVASASLVAA. The interval 27 to 343 is catalytic; sequence GPCDIYSSGG…ADIVAAKYAI (317 aa). 3 disulfide bridges follow: C29/C39, C89/C94, and C184/C185. An N-linked (GlcNAc...) asparagine glycan is attached at N91. D227 contacts substrate. Catalysis depends on E229, which acts as the Nucleophile. Substrate is bound by residues N230 and G304. D305 serves as the catalytic Proton donor. The tract at residues 344–506 is ABD; it reads ASLTSGPALT…VSWVVSTGFA (163 aa). Cysteines 409 and 447 form a disulfide. Substrate-binding residues include H424, N426, F427, D443, H471, E473, L476, and D496.

Belongs to the glycosyl hydrolase 54 family.

Its subcellular location is the secreted. It catalyses the reaction Hydrolysis of terminal non-reducing alpha-L-arabinofuranoside residues in alpha-L-arabinosides.. Its pathway is glycan metabolism; L-arabinan degradation. Alpha-L-arabinofuranosidase involved in the degradation of arabinoxylan, a major component of plant hemicellulose. Able to hydrolyze 1,5-, 1,3- and 1,2-alpha-linkages not only in L-arabinofuranosyl oligosaccharides, but also in polysaccharides containing terminal non-reducing L-arabinofuranoses in side chains, like L-arabinan, arabinogalactan and arabinoxylan. The protein is Alpha-L-arabinofuranosidase B (abfB) of Aspergillus oryzae (strain ATCC 42149 / RIB 40) (Yellow koji mold).